We begin with the raw amino-acid sequence, 243 residues long: Probable transcriptional regulatory protein BDI_1233 (243 aa).

Belongs to the TACO1 family.

The protein localises to the cytoplasm. This is Probable transcriptional regulatory protein BDI_1233 from Parabacteroides distasonis (strain ATCC 8503 / DSM 20701 / CIP 104284 / JCM 5825 / NCTC 11152).